Here is a 145-residue protein sequence, read N- to C-terminus: Protein LDOC1 (145 aa).

This sequence belongs to the LDOC1 family. In terms of assembly, interacts with NOD2.

It is found in the nucleus. In terms of biological role, may have an important role in the development and/or progression of some cancers. The sequence is that of Protein LDOC1 (LDOC1) from Gorilla gorilla gorilla (Western lowland gorilla).